Here is a 197-residue protein sequence, read N- to C-terminus: Xanthine phosphoribosyltransferase (197 aa).

Xanthine contacts are provided by leucine 20 and threonine 27. 128-132 (ANGQA) contacts 5-phospho-alpha-D-ribose 1-diphosphate. Lysine 156 serves as a coordination point for xanthine.

This sequence belongs to the purine/pyrimidine phosphoribosyltransferase family. Xpt subfamily. Homodimer.

It localises to the cytoplasm. The enzyme catalyses XMP + diphosphate = xanthine + 5-phospho-alpha-D-ribose 1-diphosphate. It functions in the pathway purine metabolism; XMP biosynthesis via salvage pathway; XMP from xanthine: step 1/1. In terms of biological role, converts the preformed base xanthine, a product of nucleic acid breakdown, to xanthosine 5'-monophosphate (XMP), so it can be reused for RNA or DNA synthesis. This is Xanthine phosphoribosyltransferase from Lactococcus lactis subsp. lactis (strain IL1403) (Streptococcus lactis).